The chain runs to 318 residues: Transaldolase (318 aa).

Lysine 131 acts as the Schiff-base intermediate with substrate in catalysis.

It belongs to the transaldolase family. Type 1 subfamily. Homodimer.

The protein resides in the cytoplasm. The enzyme catalyses D-sedoheptulose 7-phosphate + D-glyceraldehyde 3-phosphate = D-erythrose 4-phosphate + beta-D-fructose 6-phosphate. Its pathway is carbohydrate degradation; pentose phosphate pathway; D-glyceraldehyde 3-phosphate and beta-D-fructose 6-phosphate from D-ribose 5-phosphate and D-xylulose 5-phosphate (non-oxidative stage): step 2/3. In terms of biological role, transaldolase is important for the balance of metabolites in the pentose-phosphate pathway. In Buchnera aphidicola subsp. Cinara cedri (strain Cc), this protein is Transaldolase.